Reading from the N-terminus, the 20-residue chain is Fibrinogen (20 aa).

Positions 1 to 20 (LHSNLEYQYRYSGRVASGIP) constitute a Vitellogenin domain.

As to expression, secreted into the hemolymph.

The protein localises to the secreted. It localises to the extracellular space. In terms of biological role, involved in lipid transport. Plays a role in hemolymph clotting. May be involved in wound healing in the cuticle. This chain is Fibrinogen, found in Pacifastacus leniusculus (Signal crayfish).